A 335-amino-acid polypeptide reads, in one-letter code: UPF0353 protein MT1528 (335 aa).

2 helical membrane passes run Trp18 to Leu38 and Val67 to Thr87. The region spanning Val98–Leu294 is the VWFA domain. The chain crosses the membrane as a helical span at residues Val309 to Ile329.

It belongs to the UPF0353 family.

It is found in the cell membrane. The polypeptide is UPF0353 protein MT1528 (Mycobacterium tuberculosis (strain CDC 1551 / Oshkosh)).